Consider the following 782-residue polypeptide: Cleavage and polyadenylation specificity factor subunit 2 (782 aa).

Residues 407–416 (KKLEQSKEAD) show a composition bias toward basic and acidic residues. A disordered region spans residues 407-449 (KKLEQSKEADIDSSDESDIEEDIDQPSAHKTKHDLMMKGEGSR). The span at 417 to 430 (IDSSDESDIEEDID) shows a compositional bias: acidic residues. S419, S420, and S423 each carry phosphoserine. The segment covering 439 to 449 (HDLMMKGEGSR) has biased composition (basic and acidic residues). Phosphoserine is present on S660.

Belongs to the metallo-beta-lactamase superfamily. RNA-metabolizing metallo-beta-lactamase-like family. CPSF2/YSH1 subfamily. Component of the cleavage and polyadenylation specificity factor (CPSF) complex, composed of CPSF1, CPSF2, CPSF3, CPSF4 and FIP1L1. Interacts with CPSF3, CSTF2 and SYMPK. Interacts with ZC3H3.

Its subcellular location is the nucleus. Its function is as follows. Component of the cleavage and polyadenylation specificity factor (CPSF) complex that play a key role in pre-mRNA 3'-end formation, recognizing the AAUAAA signal sequence and interacting with poly(A) polymerase and other factors to bring about cleavage and poly(A) addition. Involved in the histone 3' end pre-mRNA processing. The chain is Cleavage and polyadenylation specificity factor subunit 2 (CPSF2) from Homo sapiens (Human).